The following is a 964-amino-acid chain: Protein translocase subunit SecA (964 aa).

Residues glutamine 86, 104–108 (GEGKT), and aspartate 494 each bind ATP. A disordered region spans residues 848–964 (AESADTIAVA…YKMCHGQNEK (117 aa)). Residues 871 to 882 (AEGEVEEEDEDT) are compositionally biased toward acidic residues. A compositionally biased stretch (low complexity) spans 889–900 (AESAAASGAGES). 4 residues coordinate Zn(2+): cysteine 947, cysteine 949, cysteine 958, and histidine 959.

The protein belongs to the SecA family. As to quaternary structure, monomer and homodimer. Part of the essential Sec protein translocation apparatus which comprises SecA, SecYEG and auxiliary proteins SecDF. Other proteins may also be involved. The cofactor is Zn(2+).

It is found in the cell membrane. Its subcellular location is the cytoplasm. It carries out the reaction ATP + H2O + cellular proteinSide 1 = ADP + phosphate + cellular proteinSide 2.. Its function is as follows. Part of the Sec protein translocase complex. Interacts with the SecYEG preprotein conducting channel. Has a central role in coupling the hydrolysis of ATP to the transfer of proteins into and across the cell membrane, serving as an ATP-driven molecular motor driving the stepwise translocation of polypeptide chains across the membrane. This Bifidobacterium longum (strain DJO10A) protein is Protein translocase subunit SecA.